The chain runs to 690 residues: Serotransferrin (690 aa).

A signal peptide spans 1-17 (MKPLLLLTLLGCLAAAL). 2 consecutive Transferrin-like domains span residues 24 to 329 (VKWC…SLKK) and 340 to 670 (IKWC…SLRK). A disulfide bridge links C27 with C49. Residues D73 and Y103 each contribute to the Fe(3+) site. 3 disulfide bridges follow: C126–C206, C171–C185, and C234–C248. T128, K132, A134, and G135 together coordinate hydrogencarbonate. Fe(3+) is bound at residue Y200. A Fe(3+)-binding site is contributed by H256. 2 cysteine pairs are disulfide-bonded: C343-C379 and C353-C370. Fe(3+)-binding residues include D394 and Y429. Intrachain disulfides connect C404-C682, C419-C643, C452-C530, C476-C671, C486-C499, C496-C513, and C570-C584. Positions 454, 458, 460, and 461 each coordinate hydrogencarbonate. Position 524 (Y524) interacts with Fe(3+). A Fe(3+)-binding site is contributed by H592.

This sequence belongs to the transferrin family. Monomer.

It localises to the secreted. Its function is as follows. Transferrins are iron binding transport proteins which can bind two Fe(3+) ions in association with the binding of an anion, usually bicarbonate. This is Serotransferrin (tf) from Oryzias latipes (Japanese rice fish).